The chain runs to 865 residues: Taste receptor type 1 member 3 (865 aa).

The signal sequence occupies residues 1 to 24 (MPGLALLGLTALLGLTALLDHGEG). Residues 25 to 573 (ATSCLSQQLR…FLAWGEPAVL (549 aa)) are Extracellular-facing. Asparagine 134 and asparagine 267 each carry an N-linked (GlcNAc...) asparagine glycan. A helical transmembrane segment spans residues 574-594 (LLLALLALALGLALAALGLFL). At 595–606 (WHSDSPLVQASG) the chain is on the cytoplasmic side. Residues 607–627 (GPRACFGLACLGLVCLSVLLF) traverse the membrane as a helical segment. Topologically, residues 628-642 (PGQPGPASCLAQQPL) are extracellular. Residues 643–663 (FHLPLTGCLSTFFLQAAEIFV) form a helical membrane-spanning segment. Residues 664 to 685 (GSELPPSWAEKMRGRLRGPWAW) are Cytoplasmic-facing. A helical transmembrane segment spans residues 686 to 706 (LVVLLAMLAEAALCAWYLVAF). Topologically, residues 707 to 732 (PPEVVTDWRVLPTEALVHCHVHSWIS) are extracellular. The chain crosses the membrane as a helical span at residues 733 to 753 (FGLVHATNAMLAFLCFLGTFL). Residues 754 to 765 (VQSRPGRYNGAR) are Cytoplasmic-facing. The helical transmembrane segment at 766–786 (GLTFAMLAYFITWISFVPLFA) threads the bilayer. Residues 787 to 794 (NVHVAYQP) lie on the Extracellular side of the membrane. A helical transmembrane segment spans residues 795–815 (AVQMGTILLCALGILATFHLP). The Cytoplasmic portion of the chain corresponds to 816 to 865 (KCYLLLQRPELNTPEFFLEDNARAQGSSWGQGRGESGQKQVTPDPVTSPQ). The segment at 840–865 (QGSSWGQGRGESGQKQVTPDPVTSPQ) is disordered. Residues 852-865 (GQKQVTPDPVTSPQ) show a composition bias toward polar residues.

It belongs to the G-protein coupled receptor 3 family. TAS1R subfamily. Forms homodimers or a heterodimer with TAS1R1. Expressed in taste buds.

It localises to the cell membrane. In terms of biological role, putative taste receptor. TAS1R1/TAS1R3 responds to the umami taste stimulus (the taste of monosodium glutamate). The protein is Taste receptor type 1 member 3 (TAS1R3) of Felis catus (Cat).